Consider the following 121-residue polypeptide: Large ribosomal subunit protein uL14c (121 aa).

It belongs to the universal ribosomal protein uL14 family. Part of the 50S ribosomal subunit.

The protein resides in the plastid. It is found in the chloroplast. In terms of biological role, binds to 23S rRNA. In Trieres chinensis (Marine centric diatom), this protein is Large ribosomal subunit protein uL14c.